The primary structure comprises 441 residues: UPF0761 membrane protein RSc1559 (441 aa).

The next 6 helical transmembrane spans lie at 44 to 64, 101 to 121, 141 to 161, 182 to 202, 207 to 227, and 248 to 268; these read VLSLVPILTVAFALFTAFPMF, GLTAAGLVGLVVTSVMTMLTV, VLVFWALVSFGPVLIGASLSV, VVVGLVPILLSAIAFAMLYVF, LVAWRDAFLAGLVAAVAFEIA, and FAALPIFLLWIYVSWLVTLLG.

It belongs to the UPF0761 family.

The protein resides in the cell inner membrane. This Ralstonia nicotianae (strain ATCC BAA-1114 / GMI1000) (Ralstonia solanacearum) protein is UPF0761 membrane protein RSc1559.